Here is a 264-residue protein sequence, read N- to C-terminus: tRNA (guanine-N(1)-)-methyltransferase (264 aa).

Residue 149 to 154 (IGDYVL) participates in S-adenosyl-L-methionine binding.

Belongs to the RNA methyltransferase TrmD family. As to quaternary structure, homodimer.

It localises to the cytoplasm. The enzyme catalyses guanosine(37) in tRNA + S-adenosyl-L-methionine = N(1)-methylguanosine(37) in tRNA + S-adenosyl-L-homocysteine + H(+). Its function is as follows. Specifically methylates guanosine-37 in various tRNAs. This Methylobacillus flagellatus (strain ATCC 51484 / DSM 6875 / VKM B-1610 / KT) protein is tRNA (guanine-N(1)-)-methyltransferase.